The sequence spans 89 residues: Small ribosomal subunit protein uS15 (89 aa).

Belongs to the universal ribosomal protein uS15 family. In terms of assembly, part of the 30S ribosomal subunit. Forms a bridge to the 50S subunit in the 70S ribosome, contacting the 23S rRNA.

Functionally, one of the primary rRNA binding proteins, it binds directly to 16S rRNA where it helps nucleate assembly of the platform of the 30S subunit by binding and bridging several RNA helices of the 16S rRNA. In terms of biological role, forms an intersubunit bridge (bridge B4) with the 23S rRNA of the 50S subunit in the ribosome. This chain is Small ribosomal subunit protein uS15, found in Ruegeria sp. (strain TM1040) (Silicibacter sp.).